Reading from the N-terminus, the 74-residue chain is RNA-binding protein Hfq (74 aa).

The Sm domain maps to 9–69; sequence DQFLNQLRKE…ISTFVPQKNV (61 aa).

This sequence belongs to the Hfq family. In terms of assembly, homohexamer.

Functionally, RNA chaperone that binds small regulatory RNA (sRNAs) and mRNAs to facilitate mRNA translational regulation in response to envelope stress, environmental stress and changes in metabolite concentrations. Also binds with high specificity to tRNAs. This is RNA-binding protein Hfq from Bacillus cereus (strain Q1).